The following is a 330-amino-acid chain: Ketol-acid reductoisomerase (NADP(+)) (330 aa).

The KARI N-terminal Rossmann domain occupies alanine 2 to threonine 182. Residues tyrosine 25 to glutamine 28, serine 51, serine 53, and aspartate 83 to glutamine 86 each bind NADP(+). The active site involves histidine 108. Glycine 134 lines the NADP(+) pocket. The KARI C-terminal knotted domain maps to serine 183–leucine 328. The Mg(2+) site is built by aspartate 191, glutamate 195, glutamate 227, and glutamate 231. Residue serine 252 coordinates substrate.

Belongs to the ketol-acid reductoisomerase family. Mg(2+) is required as a cofactor.

It carries out the reaction (2R)-2,3-dihydroxy-3-methylbutanoate + NADP(+) = (2S)-2-acetolactate + NADPH + H(+). The enzyme catalyses (2R,3R)-2,3-dihydroxy-3-methylpentanoate + NADP(+) = (S)-2-ethyl-2-hydroxy-3-oxobutanoate + NADPH + H(+). Its pathway is amino-acid biosynthesis; L-isoleucine biosynthesis; L-isoleucine from 2-oxobutanoate: step 2/4. It participates in amino-acid biosynthesis; L-valine biosynthesis; L-valine from pyruvate: step 2/4. In terms of biological role, involved in the biosynthesis of branched-chain amino acids (BCAA). Catalyzes an alkyl-migration followed by a ketol-acid reduction of (S)-2-acetolactate (S2AL) to yield (R)-2,3-dihydroxy-isovalerate. In the isomerase reaction, S2AL is rearranged via a Mg-dependent methyl migration to produce 3-hydroxy-3-methyl-2-ketobutyrate (HMKB). In the reductase reaction, this 2-ketoacid undergoes a metal-dependent reduction by NADPH to yield (R)-2,3-dihydroxy-isovalerate. This Synechococcus sp. (strain ATCC 27144 / PCC 6301 / SAUG 1402/1) (Anacystis nidulans) protein is Ketol-acid reductoisomerase (NADP(+)).